Here is a 432-residue protein sequence, read N- to C-terminus: Phosphomethylpyrimidine synthase (432 aa).

Residues Asn66, Met95, Tyr124, His163, 185 to 187 (SRG), 226 to 229 (DGMR), and Glu265 contribute to the substrate site. Residue His269 participates in Zn(2+) binding. Tyr292 lines the substrate pocket. His333 contacts Zn(2+). 3 residues coordinate [4Fe-4S] cluster: Cys409, Cys412, and Cys416.

The protein belongs to the ThiC family. [4Fe-4S] cluster serves as cofactor.

The enzyme catalyses 5-amino-1-(5-phospho-beta-D-ribosyl)imidazole + S-adenosyl-L-methionine = 4-amino-2-methyl-5-(phosphooxymethyl)pyrimidine + CO + 5'-deoxyadenosine + formate + L-methionine + 3 H(+). Its pathway is cofactor biosynthesis; thiamine diphosphate biosynthesis. In terms of biological role, catalyzes the synthesis of the hydroxymethylpyrimidine phosphate (HMP-P) moiety of thiamine from aminoimidazole ribotide (AIR) in a radical S-adenosyl-L-methionine (SAM)-dependent reaction. This chain is Phosphomethylpyrimidine synthase, found in Desulforudis audaxviator (strain MP104C).